We begin with the raw amino-acid sequence, 271 residues long: MSIKKTKPITSSQRFKVINTFKEITKKNPEKTLSIGKKKTGGRNNSGKITIRYLGGGHKKKYRIIDYKRNKFGIPAIIKHIEYDPNRSCLIYLLFYIDGEKRYIPSINGLNIGNKILSDKKTTTELGNAMYIMNIPLGTIISCVELIPGKGAILARSAGSYAQLIAKSKKFATIKLPSGEKRMVLSTCMATIGSIYNSDHKLEMDGKAGRKRWLGRKPRTRGVAMNPVDHPMGGGEGKSSGGHPRNRNGIPSNGFKTRNKKKITNKYIIKK.

The disordered stretch occupies residues 221 to 271 (RGVAMNPVDHPMGGGEGKSSGGHPRNRNGIPSNGFKTRNKKKITNKYIIKK). The span at 257–271 (TRNKKKITNKYIIKK) shows a compositional bias: basic residues.

Belongs to the universal ribosomal protein uL2 family. In terms of assembly, part of the 50S ribosomal subunit. Forms a bridge to the 30S subunit in the 70S ribosome.

In terms of biological role, one of the primary rRNA binding proteins. Required for association of the 30S and 50S subunits to form the 70S ribosome, for tRNA binding and peptide bond formation. It has been suggested to have peptidyltransferase activity; this is somewhat controversial. Makes several contacts with the 16S rRNA in the 70S ribosome. In Karelsulcia muelleri (strain GWSS) (Sulcia muelleri), this protein is Large ribosomal subunit protein uL2.